The primary structure comprises 86 residues: Large ribosomal subunit protein bL31B (86 aa).

The protein belongs to the bacterial ribosomal protein bL31 family. Type B subfamily. As to quaternary structure, part of the 50S ribosomal subunit.

The sequence is that of Large ribosomal subunit protein bL31B from Saccharopolyspora erythraea (strain ATCC 11635 / DSM 40517 / JCM 4748 / NBRC 13426 / NCIMB 8594 / NRRL 2338).